Consider the following 171-residue polypeptide: 3-hydroxydecanoyl-[acyl-carrier-protein] dehydratase (171 aa).

Residue His70 is part of the active site.

It belongs to the thioester dehydratase family. FabA subfamily. Homodimer.

The protein localises to the cytoplasm. The enzyme catalyses a (3R)-hydroxyacyl-[ACP] = a (2E)-enoyl-[ACP] + H2O. It carries out the reaction (3R)-hydroxydecanoyl-[ACP] = (2E)-decenoyl-[ACP] + H2O. The catalysed reaction is (2E)-decenoyl-[ACP] = (3Z)-decenoyl-[ACP]. The protein operates within lipid metabolism; fatty acid biosynthesis. Its function is as follows. Necessary for the introduction of cis unsaturation into fatty acids. Catalyzes the dehydration of (3R)-3-hydroxydecanoyl-ACP to E-(2)-decenoyl-ACP and then its isomerization to Z-(3)-decenoyl-ACP. Can catalyze the dehydratase reaction for beta-hydroxyacyl-ACPs with saturated chain lengths up to 16:0, being most active on intermediate chain length. The protein is 3-hydroxydecanoyl-[acyl-carrier-protein] dehydratase of Chromohalobacter salexigens (strain ATCC BAA-138 / DSM 3043 / CIP 106854 / NCIMB 13768 / 1H11).